Here is a 236-residue protein sequence, read N- to C-terminus: Coat protein (236 aa).

The tract at residues 1 to 27 is disordered; sequence MTTPANTTQAVGSTTSTTTTTAGATPA. A compositionally biased stretch (low complexity) spans 7-27; sequence TTQAVGSTTSTTTTTAGATPA.

This sequence belongs to the potexvirus capsid protein family.

The protein localises to the virion. In terms of biological role, required for genome encapsidation. Forms ribonucleoprotein complexes along with TGB1 helicase and viral RNA. The sequence is that of Coat protein from Brassica campestris (Field mustard).